We begin with the raw amino-acid sequence, 483 residues long: Linamarin synthase 1 (483 aa).

The Proton acceptor role is filled by histidine 22. Histidine 22 is an an anthocyanidin binding site. The active-site Charge relay is the aspartate 124. Residues threonine 146, valine 360, glutamine 362, histidine 377, tryptophan 380, asparagine 381, serine 382, and glutamate 385 each contribute to the UDP-alpha-D-glucose site. An an anthocyanidin-binding site is contributed by alanine 400. 2 residues coordinate UDP-alpha-D-glucose: glutamate 401 and glutamine 402.

It belongs to the UDP-glycosyltransferase family. As to expression, expressed in the cortex, xylem and phloem parenchyma, and in specific cells in the endodermis of the petiole of the first unfolded leaf.

The enzyme catalyses 2-hydroxy-2-methylpropanenitrile + UDP-alpha-D-glucose = linamarin + UDP + H(+). Its function is as follows. UDP-glucosyltransferase catalyzing in planta synthesis of cyanogenic glucosides. Able to glucosylate acetone cyanohydrin and 2-hydroxy-2-methylbutyronitrile, forming linamarin and lotaustralin. Also accepts, to some extent, a wide range of potential acceptor substrates, including simple alcohols, flavonoids, isoflavonoids and other hydroxynitriles such as p-hydroxymandelonitrile, mandelonitrile, (E)-4-hydroxy-2-methylbut-2-enenitrile and (E)- 2-(hydroxymethyl)but-2-enenitrile. The chain is Linamarin synthase 1 from Manihot esculenta (Cassava).